A 210-amino-acid polypeptide reads, in one-letter code: Large ribosomal subunit protein uL3 (210 aa).

A disordered region spans residues 123 to 144 (KRHGQSRGPMAHGSRYHRRPGS).

Belongs to the universal ribosomal protein uL3 family. As to quaternary structure, part of the 50S ribosomal subunit. Forms a cluster with proteins L14 and L19.

In terms of biological role, one of the primary rRNA binding proteins, it binds directly near the 3'-end of the 23S rRNA, where it nucleates assembly of the 50S subunit. In Alkaliphilus metalliredigens (strain QYMF), this protein is Large ribosomal subunit protein uL3.